A 186-amino-acid polypeptide reads, in one-letter code: Large ribosomal subunit protein bL9 (186 aa).

Residues 153 to 186 form a disordered region; sequence ELRQVKSQSQKSQQQEAKQNEVGEATDSDKADQK. A compositionally biased stretch (low complexity) spans 157 to 169; it reads VKSQSQKSQQQEA.

This sequence belongs to the bacterial ribosomal protein bL9 family.

Functionally, binds to the 23S rRNA. The chain is Large ribosomal subunit protein bL9 from Wolbachia sp. subsp. Brugia malayi (strain TRS).